A 328-amino-acid chain; its full sequence is Probable transcription factor At4g00610 (328 aa).

A disordered region spans residues 31 to 143; sequence AKNKTLVTPS…ERAKTETETG (113 aa). Residues 35–54 show a composition bias toward polar residues; it reads TLVTPSTVKKSSDVASTSKK. Positions 84–108 are enriched in acidic residues; the sequence is SEEEEEDEPSSDSESGSESESDTEA. Residues 122–143 show a composition bias toward basic and acidic residues; the sequence is NEKRQSEGKPEEERAKTETETG.

The protein belongs to the GeBP family.

The polypeptide is Probable transcription factor At4g00610 (Arabidopsis thaliana (Mouse-ear cress)).